Here is a 141-residue protein sequence, read N- to C-terminus: Mitochondrial import inner membrane translocase subunit Tim16 (141 aa).

Disordered stretches follow at residues 34–53 (AARR…SNLR) and 108–141 (LDHE…RQRR). A J-like region spans residues 60 to 113 (EAKQILNIDDPKNVDAITKNYEHLFQVNERSKGGSFYIQSKVFRAKERLDHEIK). Residues 108–118 (LDHEIKAHEQP) are compositionally biased toward basic and acidic residues.

This sequence belongs to the TIM16/PAM16 family. As to quaternary structure, probable component of the PAM complex at least composed of a mitochondrial HSP70 protein, Roe1, TIM44, blp/TIM16 and TIM14. Associates with the TIM23 complex. Expressed in distinct cells in the embryonic and larval nervous system.

Its subcellular location is the mitochondrion inner membrane. Functionally, regulates ATP-dependent protein translocation into the mitochondrial matrix. Essential for larval development. This is Mitochondrial import inner membrane translocase subunit Tim16 (blp) from Drosophila melanogaster (Fruit fly).